The following is a 692-amino-acid chain: Elongation factor G (692 aa).

The tr-type G domain occupies 8-282 (AKTRNIGIMA…AVIAYLPSPL (275 aa)). GTP is bound by residues 17-24 (AHVDAGKT), 81-85 (DTPGH), and 135-138 (NKMD).

The protein belongs to the TRAFAC class translation factor GTPase superfamily. Classic translation factor GTPase family. EF-G/EF-2 subfamily.

It is found in the cytoplasm. Its function is as follows. Catalyzes the GTP-dependent ribosomal translocation step during translation elongation. During this step, the ribosome changes from the pre-translocational (PRE) to the post-translocational (POST) state as the newly formed A-site-bound peptidyl-tRNA and P-site-bound deacylated tRNA move to the P and E sites, respectively. Catalyzes the coordinated movement of the two tRNA molecules, the mRNA and conformational changes in the ribosome. This Streptococcus equi subsp. equi (strain 4047) protein is Elongation factor G.